A 657-amino-acid chain; its full sequence is UvrABC system protein B (657 aa).

The 388-residue stretch at K29–L416 folds into the Helicase ATP-binding domain. Position 42-49 (G42–T49) interacts with ATP. The Beta-hairpin signature appears at Y95 to V118. A Helicase C-terminal domain is found at Q435 to I597. Residues A615–Q650 enclose the UVR domain.

This sequence belongs to the UvrB family. In terms of assembly, forms a heterotetramer with UvrA during the search for lesions. Interacts with UvrC in an incision complex.

It localises to the cytoplasm. Its function is as follows. The UvrABC repair system catalyzes the recognition and processing of DNA lesions. A damage recognition complex composed of 2 UvrA and 2 UvrB subunits scans DNA for abnormalities. Upon binding of the UvrA(2)B(2) complex to a putative damaged site, the DNA wraps around one UvrB monomer. DNA wrap is dependent on ATP binding by UvrB and probably causes local melting of the DNA helix, facilitating insertion of UvrB beta-hairpin between the DNA strands. Then UvrB probes one DNA strand for the presence of a lesion. If a lesion is found the UvrA subunits dissociate and the UvrB-DNA preincision complex is formed. This complex is subsequently bound by UvrC and the second UvrB is released. If no lesion is found, the DNA wraps around the other UvrB subunit that will check the other stand for damage. The chain is UvrABC system protein B from Mycoplasma pneumoniae (strain ATCC 29342 / M129 / Subtype 1) (Mycoplasmoides pneumoniae).